A 635-amino-acid polypeptide reads, in one-letter code: Two-component response regulator ARR18 (635 aa).

Residues R19 to V133 form the Response regulatory domain. D70 bears the 4-aspartylphosphate mark. 2 disordered regions span residues L144–R196 and I323–H342. Residues S166–G186 are compositionally biased toward acidic residues. The Nuclear localization signal signature appears at K193–R196. The myb-like GARP DNA-binding region spans R196–R246.

It belongs to the ARR family. Type-B subfamily. Binds the target DNA as a monomer. In terms of processing, two-component system major event consists of a His-to-Asp phosphorelay between a sensor histidine kinase (HK) and a response regulator (RR). In plants, the His-to-Asp phosphorelay involves an additional intermediate named Histidine-containing phosphotransfer protein (HPt). This multistep phosphorelay consists of a His-Asp-His-Asp sequential transfer of a phosphate group between first a His and an Asp of the HK protein, followed by the transfer to a conserved His of the HPt protein and finally the transfer to an Asp in the receiver domain of the RR protein. In terms of tissue distribution, predominantly expressed in young leaf tissue developing anthers, and siliques.

It localises to the nucleus. In terms of biological role, transcriptional activator that binds specifically to the DNA sequence 5'-[AG]GATT-3'. Functions as a response regulator involved in His-to-Asp phosphorelay signal transduction system. Phosphorylation of the Asp residue in the receiver domain activates the ability of the protein to promote the transcription of target genes. Could directly activate some type-A response regulators in response to cytokinins. The chain is Two-component response regulator ARR18 (ARR18) from Arabidopsis thaliana (Mouse-ear cress).